The chain runs to 358 residues: Anhydro-N-acetylmuramic acid kinase (358 aa).

Position 9–16 (9–16 (GTSLDGVD)) interacts with ATP.

The protein belongs to the anhydro-N-acetylmuramic acid kinase family.

The enzyme catalyses 1,6-anhydro-N-acetyl-beta-muramate + ATP + H2O = N-acetyl-D-muramate 6-phosphate + ADP + H(+). It participates in amino-sugar metabolism; 1,6-anhydro-N-acetylmuramate degradation. It functions in the pathway cell wall biogenesis; peptidoglycan recycling. In terms of biological role, catalyzes the specific phosphorylation of 1,6-anhydro-N-acetylmuramic acid (anhMurNAc) with the simultaneous cleavage of the 1,6-anhydro ring, generating MurNAc-6-P. Is required for the utilization of anhMurNAc either imported from the medium or derived from its own cell wall murein, and thus plays a role in cell wall recycling. The sequence is that of Anhydro-N-acetylmuramic acid kinase from Acidiphilium cryptum (strain JF-5).